A 567-amino-acid chain; its full sequence is Allo-aromadendrene synthase TPS4FN (567 aa).

(2E,6E)-farnesyl diphosphate is bound by residues Arg282, Asp319, Asp323, Arg462, and Asp465. The Mg(2+) site is built by Asp319 and Asp323. A DDXXD motif motif is present at residues 319-323 (DDIYD). Positions 465 and 473 each coordinate Mg(2+).

The protein belongs to the terpene synthase family. Tpsb subfamily. The cofactor is Mg(2+). Requires Mn(2+) as cofactor.

The enzyme catalyses (2E,6E)-farnesyl diphosphate = alpha-humulene + diphosphate. The catalysed reaction is (2E,6E)-farnesyl diphosphate = (+)-valencene + diphosphate. It carries out the reaction (2E)-geranyl diphosphate = beta-myrcene + diphosphate. It catalyses the reaction (2E,6E)-farnesyl diphosphate = allo-aromadendrene + diphosphate. The enzyme catalyses (2E,6E)-farnesyl diphosphate + H2O = palustrol + diphosphate. The protein operates within secondary metabolite biosynthesis; terpenoid biosynthesis. Functionally, involved in sesquiterpene olefins biosynthesis, constituants of cannabinoids and terpenoids-rich resins. Catalyzes mainly the conversion of (2E)-farnesyl diphosphate to allo-aromadendrene, and also produces minor products such as alpha-humulene, valencene and palustrol. Can also use (2E)-geranyl diphosphate as substrate with low efficiency, producing minor amounts of myrcene. This is Allo-aromadendrene synthase TPS4FN from Cannabis sativa (Hemp).